Reading from the N-terminus, the 395-residue chain is NAD(P)H-quinone oxidoreductase subunit H, chloroplastic (395 aa).

This sequence belongs to the complex I 49 kDa subunit family. NDH is composed of at least 16 different subunits, 5 of which are encoded in the nucleus.

It is found in the plastid. The protein localises to the chloroplast thylakoid membrane. It carries out the reaction a plastoquinone + NADH + (n+1) H(+)(in) = a plastoquinol + NAD(+) + n H(+)(out). The catalysed reaction is a plastoquinone + NADPH + (n+1) H(+)(in) = a plastoquinol + NADP(+) + n H(+)(out). Its function is as follows. NDH shuttles electrons from NAD(P)H:plastoquinone, via FMN and iron-sulfur (Fe-S) centers, to quinones in the photosynthetic chain and possibly in a chloroplast respiratory chain. The immediate electron acceptor for the enzyme in this species is believed to be plastoquinone. Couples the redox reaction to proton translocation, and thus conserves the redox energy in a proton gradient. This Chloranthus spicatus (Chulantree) protein is NAD(P)H-quinone oxidoreductase subunit H, chloroplastic.